A 397-amino-acid chain; its full sequence is 8-amino-7-oxononanoate synthase (397 aa).

Position 21 (R21) interacts with substrate. Residue 110–111 (GY) coordinates pyridoxal 5'-phosphate. H135 serves as a coordination point for substrate. Pyridoxal 5'-phosphate-binding residues include S181, H209, and T238. Position 241 is an N6-(pyridoxal phosphate)lysine (K241). T355 serves as a coordination point for substrate.

This sequence belongs to the class-II pyridoxal-phosphate-dependent aminotransferase family. BioF subfamily. As to quaternary structure, homodimer. Pyridoxal 5'-phosphate serves as cofactor.

The catalysed reaction is 6-carboxyhexanoyl-[ACP] + L-alanine + H(+) = (8S)-8-amino-7-oxononanoate + holo-[ACP] + CO2. It functions in the pathway cofactor biosynthesis; biotin biosynthesis. In terms of biological role, catalyzes the decarboxylative condensation of pimeloyl-[acyl-carrier protein] and L-alanine to produce 8-amino-7-oxononanoate (AON), [acyl-carrier protein], and carbon dioxide. The sequence is that of 8-amino-7-oxononanoate synthase from Saccharophagus degradans (strain 2-40 / ATCC 43961 / DSM 17024).